Reading from the N-terminus, the 507-residue chain is Putative thymidine phosphorylase (507 aa).

This sequence belongs to the thymidine/pyrimidine-nucleoside phosphorylase family. Type 2 subfamily.

It catalyses the reaction thymidine + phosphate = 2-deoxy-alpha-D-ribose 1-phosphate + thymine. In Ralstonia nicotianae (strain ATCC BAA-1114 / GMI1000) (Ralstonia solanacearum), this protein is Putative thymidine phosphorylase.